Reading from the N-terminus, the 343-residue chain is Mitochondrial distribution and morphology protein 34 (343 aa).

Residues methionine 1 to glutamine 196 form the SMP-LTD domain. 2 disordered regions span residues glutamate 227–glycine 255 and glycine 300–arginine 325. Over residues serine 306–glycine 317 the composition is skewed to low complexity.

This sequence belongs to the MDM34 family. Component of the ER-mitochondria encounter structure (ERMES) or MDM complex, composed of MMM1, MDM10, MDM12 and MDM34.

It is found in the mitochondrion outer membrane. In terms of biological role, component of the ERMES/MDM complex, which serves as a molecular tether to connect the endoplasmic reticulum (ER) and mitochondria. Components of this complex are involved in the control of mitochondrial shape and protein biogenesis, and function in nonvesicular lipid trafficking between the ER and mitochondria. MDM34 is required for the interaction of the ER-resident membrane protein MMM1 and the outer mitochondrial membrane-resident beta-barrel protein MDM10. The chain is Mitochondrial distribution and morphology protein 34 from Cryptococcus neoformans var. neoformans serotype D (strain B-3501A) (Filobasidiella neoformans).